A 1223-amino-acid polypeptide reads, in one-letter code: ATP-dependent DNA helicase P143 (1223 aa).

Residues 692–701 (RKCRCVQKIK) carry the Nuclear localization signal motif. 919–926 (GVPLSGKS) serves as a coordination point for ATP. The segment at residues 967 to 981 (TINELKKCSESFFKK) is a DNA-binding region (H-T-H motif).

The protein resides in the host nucleus. The catalysed reaction is ATP + H2O = ADP + phosphate + H(+). Functionally, essential for the initiation of viral DNA replication, it may contribute to other functions such as controlling the switch to the late phase and leading to the inhibition of host protein synthesis. Required for late and very late gene expression. This Orgyia pseudotsugata multicapsid polyhedrosis virus (OpMNPV) protein is ATP-dependent DNA helicase P143 (P143).